The following is a 284-amino-acid chain: NH(3)-dependent NAD(+) synthetase (284 aa).

51–58 is an ATP binding site; sequence GISGGIDS. Aspartate 57 lines the Mg(2+) pocket. Residue arginine 148 coordinates deamido-NAD(+). Threonine 168 serves as a coordination point for ATP. Glutamate 173 serves as a coordination point for Mg(2+). The deamido-NAD(+) site is built by lysine 181 and aspartate 188. Residues lysine 197 and threonine 219 each coordinate ATP. 268 to 269 serves as a coordination point for deamido-NAD(+); it reads HK.

Belongs to the NAD synthetase family. Homodimer.

It catalyses the reaction deamido-NAD(+) + NH4(+) + ATP = AMP + diphosphate + NAD(+) + H(+). Its pathway is cofactor biosynthesis; NAD(+) biosynthesis; NAD(+) from deamido-NAD(+) (ammonia route): step 1/1. In terms of biological role, catalyzes the ATP-dependent amidation of deamido-NAD to form NAD. Uses ammonia as a nitrogen source. This chain is NH(3)-dependent NAD(+) synthetase, found in Burkholderia pseudomallei (strain 1106a).